A 228-amino-acid polypeptide reads, in one-letter code: Abnormal cell migration protein 18 (228 aa).

Residues 1-19 (MTFTLRLLVLCTVYSYVIS) form the signal peptide. N-linked (GlcNAc...) asparagine glycosylation is found at Asn135 and Asn159.

Expressed in body wall muscle.

It localises to the secreted. The protein localises to the extracellular space. The protein resides in the extracellular matrix. It is found in the basement membrane. Functionally, required for the directional control of distal tip cell migration during gonadogenesis, probably by recruiting fibulin fbl-1 to the gonad basement membrane. In Caenorhabditis elegans, this protein is Abnormal cell migration protein 18.